The following is a 374-amino-acid chain: MNYQLITTDDGLSEVCSQARRMPQVALDTEFVRTRTYYPQLGLIQLFDGERLSLIDPLSITVWQPFCDLLLDPAVTKYLHAGSEDLEVFLNAFGLLPTPFVDTQILVAFLGKPLSYGFAALVADYMQVTLDKSESRTDWLARPLSEKQCQYAAADVYYLLPMAIRLVEETTSAGWWEAALDECRQLCQRKQDVLAPEQAYREIGNAWQLKGRHLACLQKLADWRLRKARERDSAVNFIVREEHLGQVARYLPGSLGELGALGLSGPEIRYHGKTLLELVAETQTMDAAEYPEPVINLIDYPGYKKAFREIKDLVQQQAERSGLSAELLASRRQINRLLSWHWKLAPQTHVPELLSGWRGRLFGEPLKGILANYI.

One can recognise a 3'-5' exonuclease domain in the interval 3–171 (YQLITTDDGL…MAIRLVEETT (169 aa)). An HRDC domain is found at 210 to 289 (KGRHLACLQK…AETQTMDAAE (80 aa)).

The protein belongs to the RNase D family. Requires a divalent metal cation as cofactor.

It localises to the cytoplasm. It carries out the reaction Exonucleolytic cleavage that removes extra residues from the 3'-terminus of tRNA to produce 5'-mononucleotides.. Functionally, exonuclease involved in the 3' processing of various precursor tRNAs. Initiates hydrolysis at the 3'-terminus of an RNA molecule and releases 5'-mononucleotides. The sequence is that of Ribonuclease D from Musicola paradisiaca (strain Ech703) (Dickeya paradisiaca).